Reading from the N-terminus, the 167-residue chain is Glucose-6-phosphate isomerase (167 aa).

The active-site Proton donor is Glu54. His85 is a catalytic residue.

It belongs to the GPI family.

The protein localises to the cytoplasm. It carries out the reaction alpha-D-glucose 6-phosphate = beta-D-fructose 6-phosphate. The protein operates within carbohydrate biosynthesis; gluconeogenesis. Its pathway is carbohydrate degradation; glycolysis; D-glyceraldehyde 3-phosphate and glycerone phosphate from D-glucose: step 2/4. Its function is as follows. Catalyzes the reversible isomerization of glucose-6-phosphate to fructose-6-phosphate. The chain is Glucose-6-phosphate isomerase from Klebsiella oxytoca.